The primary structure comprises 32 residues: Hyaluronidase-Pk1a (32 aa).

N-linked (GlcNAc...) asparagine glycosylation is present at Asn23.

It belongs to the glycosyl hydrolase 56 family. As to expression, expressed by the venom gland.

The protein resides in the secreted. It catalyses the reaction Random hydrolysis of (1-&gt;4)-linkages between N-acetyl-beta-D-glucosamine and D-glucuronate residues in hyaluronate.. Hydrolyzes high molecular weight hyaluronic acid to produce small oligosaccharides. The chain is Hyaluronidase-Pk1a from Phoneutria keyserlingi (Brazilian wandering spider).